The following is a 150-amino-acid chain: Probable NADH dehydrogenase [ubiquinone] 1 alpha subcomplex subunit 5 (150 aa).

This sequence belongs to the complex I NDUFA5 subunit family. As to quaternary structure, complex I is composed of 45 different subunits.

The protein resides in the mitochondrion inner membrane. Functionally, accessory subunit of the mitochondrial membrane respiratory chain NADH dehydrogenase (Complex I), that is believed not to be involved in catalysis. Complex I functions in the transfer of electrons from NADH to the respiratory chain. The immediate electron acceptor for the enzyme is believed to be ubiquinone. This is Probable NADH dehydrogenase [ubiquinone] 1 alpha subcomplex subunit 5 from Caenorhabditis elegans.